A 206-amino-acid polypeptide reads, in one-letter code: Pyridoxine/pyridoxamine 5'-phosphate oxidase (206 aa).

Residues 53 to 58 (RMVLLK), 68 to 69 (YT), K75, and Q97 each bind FMN. Position 58 (K58) interacts with substrate. Substrate is bound by residues Y115, R119, and S123. FMN contacts are provided by residues 132–133 (QS) and W177. 183–185 (RLH) is a binding site for substrate. R187 provides a ligand contact to FMN.

The protein belongs to the pyridoxamine 5'-phosphate oxidase family. In terms of assembly, homodimer. FMN serves as cofactor.

The catalysed reaction is pyridoxamine 5'-phosphate + O2 + H2O = pyridoxal 5'-phosphate + H2O2 + NH4(+). The enzyme catalyses pyridoxine 5'-phosphate + O2 = pyridoxal 5'-phosphate + H2O2. Its pathway is cofactor metabolism; pyridoxal 5'-phosphate salvage; pyridoxal 5'-phosphate from pyridoxamine 5'-phosphate: step 1/1. It functions in the pathway cofactor metabolism; pyridoxal 5'-phosphate salvage; pyridoxal 5'-phosphate from pyridoxine 5'-phosphate: step 1/1. Catalyzes the oxidation of either pyridoxine 5'-phosphate (PNP) or pyridoxamine 5'-phosphate (PMP) into pyridoxal 5'-phosphate (PLP). The sequence is that of Pyridoxine/pyridoxamine 5'-phosphate oxidase from Rhizobium etli (strain CIAT 652).